The sequence spans 354 residues: Chorismate synthase (354 aa).

R48 contributes to the NADP(+) binding site. FMN contacts are provided by residues 125-127, G277, 292-296, and R318; these read RAS and KPIPS.

The protein belongs to the chorismate synthase family. In terms of assembly, homotetramer. FMNH2 serves as cofactor.

The catalysed reaction is 5-O-(1-carboxyvinyl)-3-phosphoshikimate = chorismate + phosphate. It participates in metabolic intermediate biosynthesis; chorismate biosynthesis; chorismate from D-erythrose 4-phosphate and phosphoenolpyruvate: step 7/7. Its function is as follows. Catalyzes the anti-1,4-elimination of the C-3 phosphate and the C-6 proR hydrogen from 5-enolpyruvylshikimate-3-phosphate (EPSP) to yield chorismate, which is the branch point compound that serves as the starting substrate for the three terminal pathways of aromatic amino acid biosynthesis. This reaction introduces a second double bond into the aromatic ring system. This is Chorismate synthase from Nitratidesulfovibrio vulgaris (strain ATCC 29579 / DSM 644 / CCUG 34227 / NCIMB 8303 / VKM B-1760 / Hildenborough) (Desulfovibrio vulgaris).